A 181-amino-acid chain; its full sequence is Disulfide bond formation protein B (181 aa).

The Cytoplasmic segment spans residues 1–13; that stretch reads MLSVGQWPNKPFA. The helical transmembrane segment at 14–30 threads the bilayer; the sequence is WLLLFLGCSGLLGAALY. At 31–48 the chain is on the periplasmic side; that stretch reads FQMVLNLEPCVKCVYQRM. Cysteine 40 and cysteine 43 are joined by a disulfide. Residues 49–64 traverse the membrane as a helical segment; that stretch reads AVIGIGLSAIVGLFGS. Residues 65 to 71 lie on the Cytoplasmic side of the membrane; the sequence is GLWLTRW. Residues 72–89 form a helical membrane-spanning segment; it reads AALIGWLYSSYQGLLIAY. Over 90-145 the chain is Periplasmic; that stretch reads DHWDLQTSKNAFFAVCESAPNFPDWAPMHEWMPGLFAAPGLCGDIDWQWLGLGMPG. Residues cysteine 105 and cysteine 131 are joined by a disulfide bond. Residues 146–164 traverse the membrane as a helical segment; sequence WMTVIFAGLLLIGIIVTIC. The Cytoplasmic segment spans residues 165–181; the sequence is HIISSFTKKDGLVLYHK.

Belongs to the DsbB family.

It localises to the cell inner membrane. Required for disulfide bond formation in some periplasmic proteins. Acts by oxidizing the DsbA protein. In Idiomarina loihiensis (strain ATCC BAA-735 / DSM 15497 / L2-TR), this protein is Disulfide bond formation protein B.